The following is a 217-amino-acid chain: GRB2-related adapter protein (217 aa).

The region spanning Met1–His58 is the SH3 1 domain. An SH2 domain is found at Trp60–Leu154. The SH3 2 domain occupies Pro158 to Leu217.

Belongs to the GRB2/sem-5/DRK family. As to quaternary structure, associates through its SH2 domain with ligand-activated receptors for stem cell factor (KIT) and erythropoietin (EPOR). Also forms a stable complex with the Bcr-Abl oncoprotein. GRAP is associated with the Ras guanine nucleotide exchange factor SOS1, primarily through its N-terminal SH3 domain. Interacts with phosphorylated LAT upon TCR activation. Interacts with SHB.

It is found in the membrane. The protein localises to the synapse. Functionally, couples signals from receptor and cytoplasmic tyrosine kinases to the Ras signaling pathway. Plays a role in the inner ear and in hearing. The chain is GRB2-related adapter protein from Homo sapiens (Human).